Here is a 390-residue protein sequence, read N- to C-terminus: 3-ketoacyl-CoA thiolase (390 aa).

The Acyl-thioester intermediate role is filled by cysteine 95. Residues histidine 346 and cysteine 376 each act as proton acceptor in the active site.

Belongs to the thiolase-like superfamily. Thiolase family. In terms of assembly, heterotetramer of two alpha chains (FadB) and two beta chains (FadA).

Its subcellular location is the cytoplasm. The catalysed reaction is an acyl-CoA + acetyl-CoA = a 3-oxoacyl-CoA + CoA. Its pathway is lipid metabolism; fatty acid beta-oxidation. Its function is as follows. Catalyzes the final step of fatty acid oxidation in which acetyl-CoA is released and the CoA ester of a fatty acid two carbons shorter is formed. In Acinetobacter baylyi (strain ATCC 33305 / BD413 / ADP1), this protein is 3-ketoacyl-CoA thiolase.